The chain runs to 127 residues: Gamma-synuclein (127 aa).

2 tandem repeats follow at residues 20-30 and 31-41. The interval 20 to 67 is 4 X 11 AA tandem repeats of [EGSA]-K-T-K-[EQ]-[GQ]-V-X(4); that stretch reads EKTKQGVTEAAEKTKEGVMYVGTKTKENVVHSVTSVAEKTKEQANAVS. Residues 42-56 form a 3; approximate repeat; sequence TKTKENVVHSVTSVA. Copy 4 of the repeat occupies 57 to 67; sequence EKTKEQANAVS. Residues S67 and S72 each carry the phosphoserine modification. Residues 97–127 form a disordered region; that stretch reads KEDLKPSAPQQEGEAAKEKEEVAEEAQSGGD. S124 is modified (phosphoserine; by BARK1, CaMK2 and CK2).

This sequence belongs to the synuclein family. As to quaternary structure, may be a centrosome-associated protein. Interacts with MYOC; affects its secretion and its aggregation. In terms of processing, phosphorylated. Phosphorylation by GRK5 appears to occur on residues distinct from the residue phosphorylated by other kinases.

The protein localises to the cytoplasm. Its subcellular location is the perinuclear region. It is found in the cytoskeleton. The protein resides in the microtubule organizing center. It localises to the centrosome. The protein localises to the spindle. Plays a role in neurofilament network integrity. May be involved in modulating axonal architecture during development and in the adult. In vitro, increases the susceptibility of neurofilament-H to calcium-dependent proteases. May also function in modulating the keratin network in skin. Activates the MAPK and Elk-1 signal transduction pathway. This is Gamma-synuclein (SNCG) from Macaca fascicularis (Crab-eating macaque).